We begin with the raw amino-acid sequence, 859 residues long: Transforming growth factor-beta receptor-associated protein 1 (859 aa).

Residues 24–297 (RGLLECVECC…HILQDFEGRV (274 aa)) form the CNH domain. The stretch at 563–727 (KRPLDEQQSG…LLAVYLGPGP (165 aa)) is one CHCR repeat.

Belongs to the TRAP1 family. As to quaternary structure, interacts with TGFBR2 and ACVR2B; in the absence of ligand stimulation. Interacts with TGFBR1, ACVRL1, BMPR1A and ACVR1B; in the absence of ligand stimulation and to a less extent. Interacts with SMAD4; the interaction seems to be mutually exclusive with the interaction of SMAD4 and phosphorylated SMAD2. May interact with ALOX5. Interacts with RAB5C. Interacts with VPS8, VPS11 and VPS16. Component of the putative class C core vacuole/endosome tethering (CORVET) complex; the core of which composed of the class C Vps proteins VPS11, VPS16, VPS18 and VPS33A, is associated with VPS8 and TGFBRAP1.

Its subcellular location is the cytoplasm. The protein resides in the early endosome. In terms of biological role, plays a role in the TGF-beta/activin signaling pathway. It associates with inactive heteromeric TGF-beta and activin receptor complexes, mainly through the type II receptor, and is released upon activation of signaling. May recruit SMAD4 to the vicinity of the receptor complex and facilitate its interaction with receptor-regulated Smads, such as SMAD2. Its function is as follows. Plays a role in vesicle-mediated protein trafficking of the endocytic membrane transport pathway. Believed to act as a component of the putative CORVET endosomal tethering complexes which is proposed to be involved in the Rab5-to-Rab7 endosome conversion probably implicating MON1A/B, and via binding SNAREs and SNARE complexes to mediate tethering and docking events during SNARE-mediated membrane fusion. The CORVET complex is proposed to function as a Rab5 effector to mediate early endosome fusion probably in specific endosome subpopulations. Functions predominantly in APPL1-containing endosomes and in degradative but not recycling trafficking of endocytosed cargo. In Bos taurus (Bovine), this protein is Transforming growth factor-beta receptor-associated protein 1 (TGFBRAP1).